The primary structure comprises 505 residues: NADH-quinone oxidoreductase subunit N (505 aa).

14 consecutive transmembrane segments (helical) span residues 20–40, 59–79, 83–103, 115–135, 137–157, 172–192, 220–240, 251–271, 285–305, 314–334, 342–362, 394–414, 431–451, and 481–501; these read ALAP…GDLF, ALAL…GGVF, GLAA…ALMS, GEYY…VSAG, AIVL…LVAL, FLMG…LYGL, AVVA…TVPF, APTT…FAVL, LWSD…NIAA, MLAY…AACT, AAYL…IIYL, LAAV…TAGF, ITVV…LGVA, and AVCL…LFWI.

This sequence belongs to the complex I subunit 2 family. As to quaternary structure, NDH-1 is composed of 14 different subunits. Subunits NuoA, H, J, K, L, M, N constitute the membrane sector of the complex.

It is found in the cell inner membrane. The enzyme catalyses a quinone + NADH + 5 H(+)(in) = a quinol + NAD(+) + 4 H(+)(out). Functionally, NDH-1 shuttles electrons from NADH, via FMN and iron-sulfur (Fe-S) centers, to quinones in the respiratory chain. The immediate electron acceptor for the enzyme in this species is believed to be ubiquinone. Couples the redox reaction to proton translocation (for every two electrons transferred, four hydrogen ions are translocated across the cytoplasmic membrane), and thus conserves the redox energy in a proton gradient. The polypeptide is NADH-quinone oxidoreductase subunit N (Desulfovibrio desulfuricans (strain ATCC 27774 / DSM 6949 / MB)).